The following is a 114-amino-acid chain: Iron-sulfur cluster insertion protein ErpA (114 aa).

Residues C42, C106, and C108 each contribute to the iron-sulfur cluster site.

The protein belongs to the HesB/IscA family. As to quaternary structure, homodimer. Requires iron-sulfur cluster as cofactor.

Its function is as follows. Required for insertion of 4Fe-4S clusters for at least IspG. The protein is Iron-sulfur cluster insertion protein ErpA of Serratia proteamaculans (strain 568).